A 447-amino-acid polypeptide reads, in one-letter code: Tubulin beta chain (447 aa).

GTP-binding residues include Gln11, Glu69, Ser138, Gly142, Thr143, Gly144, Asn204, and Asn226. A Mg(2+)-binding site is contributed by Glu69. A disordered region spans residues 424–447 (QYQEARSTDSDEYDNEEYYNQQEE). Acidic residues predominate over residues 433–447 (SDEYDNEEYYNQQEE).

The protein belongs to the tubulin family. In terms of assembly, dimer of alpha and beta chains. A typical microtubule is a hollow water-filled tube with an outer diameter of 25 nm and an inner diameter of 15 nM. Alpha-beta heterodimers associate head-to-tail to form protofilaments running lengthwise along the microtubule wall with the beta-tubulin subunit facing the microtubule plus end conferring a structural polarity. Microtubules usually have 13 protofilaments but different protofilament numbers can be found in some organisms and specialized cells. It depends on Mg(2+) as a cofactor. Lens specific.

It is found in the cytoplasm. Its subcellular location is the cytoskeleton. In terms of biological role, tubulin is the major constituent of microtubules, a cylinder consisting of laterally associated linear protofilaments composed of alpha- and beta-tubulin heterodimers. Microtubules grow by the addition of GTP-tubulin dimers to the microtubule end, where a stabilizing cap forms. Below the cap, tubulin dimers are in GDP-bound state, owing to GTPase activity of alpha-tubulin. The sequence is that of Tubulin beta chain from Enteroctopus dofleini (North Pacific giant octopus).